Consider the following 244-residue polypeptide: 1-(5-phosphoribosyl)-5-[(5-phosphoribosylamino)methylideneamino] imidazole-4-carboxamide isomerase (244 aa).

Catalysis depends on D8, which acts as the Proton acceptor. The active-site Proton donor is the D130.

Belongs to the HisA/HisF family.

It is found in the cytoplasm. It carries out the reaction 1-(5-phospho-beta-D-ribosyl)-5-[(5-phospho-beta-D-ribosylamino)methylideneamino]imidazole-4-carboxamide = 5-[(5-phospho-1-deoxy-D-ribulos-1-ylimino)methylamino]-1-(5-phospho-beta-D-ribosyl)imidazole-4-carboxamide. It participates in amino-acid biosynthesis; L-histidine biosynthesis; L-histidine from 5-phospho-alpha-D-ribose 1-diphosphate: step 4/9. In Syntrophomonas wolfei subsp. wolfei (strain DSM 2245B / Goettingen), this protein is 1-(5-phosphoribosyl)-5-[(5-phosphoribosylamino)methylideneamino] imidazole-4-carboxamide isomerase.